A 438-amino-acid chain; its full sequence is Putative phospholipase A2 (438 aa).

Catalysis depends on Ser257, which acts as the Nucleophile. Active-site charge relay system residues include Asp291 and His368.

This sequence belongs to the serine esterase family.

The protein resides in the cytoplasm. The protein localises to the nucleus. It carries out the reaction a 1-O-alkyl-2-acetyl-sn-glycero-3-phosphocholine + H2O = a 1-O-alkyl-sn-glycero-3-phosphocholine + acetate + H(+). This Schizosaccharomyces pombe (strain 972 / ATCC 24843) (Fission yeast) protein is Putative phospholipase A2.